The primary structure comprises 493 residues: Transcription termination factor MTERF5, chloroplastic (493 aa).

The transit peptide at M1 to R43 directs the protein to the chloroplast.

It belongs to the mTERF family. Interacts with pTAC6. As to expression, expressed in roots, rosette leaves, cauline leaves, stems, flower buds and open flowers.

The protein resides in the plastid. It localises to the chloroplast. Transcription termination factor required for processing and steady-state levels of plastid transcripts. Involved also in chloroplast transcriptional pausing, a general feature of chloroplast genes. Specifically and positively regulates the transcription of chloroplast psbEFLJ encoding for photosystem II (PSII) core subunits psbE, psbF, psbL and psbJ; causes the plastid-encoded RNA polymerase (PEP) complex to pause at psbEFLJ by binding to the +30 to +51 region of double-stranded DNA, and recruits additional pTAC6 to the transcriptionally paused region of psbEFLJ. May play a role in response to abiotic stresses. In Arabidopsis thaliana (Mouse-ear cress), this protein is Transcription termination factor MTERF5, chloroplastic.